A 223-amino-acid polypeptide reads, in one-letter code: Peptidyl-tRNA hydrolase (223 aa).

Tyr14 contacts tRNA. His19 acts as the Proton acceptor in catalysis. TRNA contacts are provided by Tyr64, Asn66, and Asn112. The disordered stretch occupies residues 183-223 (MNVRNTRPKPGKRQKGEGDGSTDPAPAAKEGKGPLPPTQKP).

Belongs to the PTH family. In terms of assembly, monomer.

It localises to the cytoplasm. The enzyme catalyses an N-acyl-L-alpha-aminoacyl-tRNA + H2O = an N-acyl-L-amino acid + a tRNA + H(+). Its function is as follows. Hydrolyzes ribosome-free peptidyl-tRNAs (with 1 or more amino acids incorporated), which drop off the ribosome during protein synthesis, or as a result of ribosome stalling. Functionally, catalyzes the release of premature peptidyl moieties from peptidyl-tRNA molecules trapped in stalled 50S ribosomal subunits, and thus maintains levels of free tRNAs and 50S ribosomes. This is Peptidyl-tRNA hydrolase from Sorangium cellulosum (strain So ce56) (Polyangium cellulosum (strain So ce56)).